The following is a 371-amino-acid chain: tRNA-specific 2-thiouridylase MnmA (371 aa).

ATP contacts are provided by residues glycine 14–serine 21 and methionine 40. Residues asparagine 100–aspartate 102 form an interaction with target base in tRNA region. Cysteine 105 functions as the Nucleophile in the catalytic mechanism. The cysteines at positions 105 and 205 are disulfide-linked. Glycine 129 contacts ATP. The interaction with tRNA stretch occupies residues lysine 155 to glutamine 157. Residue cysteine 205 is the Cysteine persulfide intermediate of the active site. The tract at residues arginine 321 to tyrosine 322 is interaction with tRNA.

The protein belongs to the MnmA/TRMU family.

It is found in the cytoplasm. It catalyses the reaction S-sulfanyl-L-cysteinyl-[protein] + uridine(34) in tRNA + AH2 + ATP = 2-thiouridine(34) in tRNA + L-cysteinyl-[protein] + A + AMP + diphosphate + H(+). Its function is as follows. Catalyzes the 2-thiolation of uridine at the wobble position (U34) of tRNA, leading to the formation of s(2)U34. The chain is tRNA-specific 2-thiouridylase MnmA from Bordetella parapertussis (strain 12822 / ATCC BAA-587 / NCTC 13253).